The chain runs to 330 residues: MAPISHTRISLSMYNSWIRYFCRTGETNEAMSLLAEIHSLGSRPDPLSYVSFIETLASLRRTLEADALFHEVVRFMIYGSYSVRLYNALVSRYLRKEVSWRVVNEMKKRKFRLNSFVYGKIIRIYRDNGMWKKALGIVEEIREIGLPMDVEIYNSVIDTFGKYGELDEELQVLEKLQRSSDSRPNIRTWNSLIRWHCHHGAVDMALELFTMIFEDIGELVGKLKSQGVAPSANLFCTLANAYAQQGLCKQTVKVLKMMENEGIEPNLIMLNVLINAFGTAGKHMEALSIYHHIKETVWIHPDVVTYSTLMKAFTRAKKYEMVCSFYLVTL.

PPR repeat units follow at residues serine 10–proline 44, aspartate 45–phenylalanine 75, valine 83–leucine 113, asparagine 114–methionine 148, aspartate 149–serine 179, asparagine 185–aspartate 215, serine 231–proline 265, asparagine 266–threonine 296, and aspartate 302–leucine 330.

Belongs to the PPR family. P subfamily.

The chain is Putative pentatricopeptide repeat-containing protein At5g36300 from Arabidopsis thaliana (Mouse-ear cress).